A 119-amino-acid polypeptide reads, in one-letter code: Large ribosomal subunit protein bL20 (119 aa).

This sequence belongs to the bacterial ribosomal protein bL20 family.

Binds directly to 23S ribosomal RNA and is necessary for the in vitro assembly process of the 50S ribosomal subunit. It is not involved in the protein synthesizing functions of that subunit. The protein is Large ribosomal subunit protein bL20 of Nitrosococcus oceani (strain ATCC 19707 / BCRC 17464 / JCM 30415 / NCIMB 11848 / C-107).